Here is a 125-residue protein sequence, read N- to C-terminus: Putative iron-sulfur cluster insertion protein ErpA 2 (125 aa).

Iron-sulfur cluster-binding residues include Cys53, Cys117, and Cys119.

Belongs to the HesB/IscA family. In terms of assembly, homodimer. Iron-sulfur cluster serves as cofactor.

Required for insertion of 4Fe-4S clusters. The polypeptide is Putative iron-sulfur cluster insertion protein ErpA 2 (Polaromonas naphthalenivorans (strain CJ2)).